A 172-amino-acid polypeptide reads, in one-letter code: Small ribosomal subunit protein uS5 (172 aa).

Positions 17–80 constitute an S5 DRBM domain; sequence LREKMIAVNR…DEARRKMVKV (64 aa).

It belongs to the universal ribosomal protein uS5 family. Part of the 30S ribosomal subunit. Contacts proteins S4 and S8.

Functionally, with S4 and S12 plays an important role in translational accuracy. Its function is as follows. Located at the back of the 30S subunit body where it stabilizes the conformation of the head with respect to the body. The chain is Small ribosomal subunit protein uS5 from Ralstonia nicotianae (strain ATCC BAA-1114 / GMI1000) (Ralstonia solanacearum).